Here is a 350-residue protein sequence, read N- to C-terminus: TLC domain-containing protein fld-1 (350 aa).

A helical transmembrane segment spans residues 9-29 (TDLLGPVPTMFLWVIVSFAFF). The interval 65–100 (GQEAENTENPPENEAEAGEQVEQEPEPDSRDLSAIP) is disordered. Residues 75–90 (PENEAEAGEQVEQEPE) show a composition bias toward acidic residues. The TLC domain maps to 102-279 (NKKWRISNEC…IINGLVIASL (178 aa)). Helical transmembrane passes span 111–131 (CVSL…LLYY), 145–165 (VAIN…VDLL), 173–193 (IIEL…TMFF), 195–215 (RFLG…FLHS), 229–249 (PSFR…RLCV), and 270–292 (IING…RLLA).

Ubiquitously expressed.

It localises to the cell membrane. In terms of biological role, regulates the composition and fluidity of the plasma membrane. Inhibits the incorporation of membrane-fluidizing phospholipids containing omega-3 long-chain polyunsaturated fatty acids (LCPUFA) and thereby promotes membrane rigidity. Does not appear to have any effect on LCPUFA synthesis. This is TLC domain-containing protein fld-1 from Caenorhabditis elegans.